Consider the following 257-residue polypeptide: MDRIIEKLESGWWIVSHEQKLWLPYGELPHGLAANFDLVGQRALRIGEWQGEPVWLVLQHRRHDMGSVRQVIDQDAGLFQLAGRGVQLAEFYRSHKFCGYCGHPMHPSKTEWAMLCSHCRERYYPQIAPCIIVAIRREDSILLAQHVRHRNGVHTVLAGFVEVGETLEQAVAREVMEESGIKVKNLRYVTSQPWPFPQSLMTAFMAEYDSGDIVIDPKELLEANWYRYDDLPLLPPPGTVARRLIEDTVAMCRAEYD.

Arginine 69 serves as a coordination point for substrate. Residues cysteine 98 and cysteine 101 each contribute to the Zn(2+) site. A substrate-binding site is contributed by glutamate 111. 2 residues coordinate Zn(2+): cysteine 116 and cysteine 119. Tyrosine 124 contributes to the substrate binding site. Residues 125-248 (PQIAPCIIVA…TVARRLIEDT (124 aa)) form the Nudix hydrolase domain. Residues alanine 158, glutamate 174, and glutamate 178 each coordinate a divalent metal cation. The Nudix box motif lies at 159–180 (GFVEVGETLEQAVAREVMEESG). 192-199 (QPWPFPQS) serves as a coordination point for substrate. An a divalent metal cation-binding site is contributed by glutamate 219. Substrate is bound at residue alanine 241.

It belongs to the Nudix hydrolase family. NudC subfamily. In terms of assembly, homodimer. Mg(2+) serves as cofactor. Requires Mn(2+) as cofactor. It depends on Zn(2+) as a cofactor.

It carries out the reaction a 5'-end NAD(+)-phospho-ribonucleoside in mRNA + H2O = a 5'-end phospho-adenosine-phospho-ribonucleoside in mRNA + beta-nicotinamide D-ribonucleotide + 2 H(+). The enzyme catalyses NAD(+) + H2O = beta-nicotinamide D-ribonucleotide + AMP + 2 H(+). It catalyses the reaction NADH + H2O = reduced beta-nicotinamide D-ribonucleotide + AMP + 2 H(+). In terms of biological role, mRNA decapping enzyme that specifically removes the nicotinamide adenine dinucleotide (NAD) cap from a subset of mRNAs by hydrolyzing the diphosphate linkage to produce nicotinamide mononucleotide (NMN) and 5' monophosphate mRNA. The NAD-cap is present at the 5'-end of some mRNAs and stabilizes RNA against 5'-processing. Has preference for mRNAs with a 5'-end purine. Catalyzes the hydrolysis of a broad range of dinucleotide pyrophosphates. This Salmonella schwarzengrund (strain CVM19633) protein is NAD-capped RNA hydrolase NudC.